A 461-amino-acid polypeptide reads, in one-letter code: Integrator complex subunit 12 (461 aa).

Positions 42 to 131 are disordered; it reads GIDSSYRPTQ…PETRSSPITV (90 aa). Lys-68 is covalently cross-linked (Glycyl lysine isopeptide (Lys-Gly) (interchain with G-Cter in SUMO2)). The segment covering 88–124 has biased composition (basic and acidic residues); sequence TAEKIKKEAEKRPADKMKDVTEGIDVPKKPRLEKPET. Ser-127 carries the post-translational modification Phosphoserine. The segment at 158–214 adopts a PHD-type zinc-finger fold; that stretch reads GLACVVCRQMTVASGNQLVECQECHNLYHQDCHKPQVTDKEVNDPRLVWYCARCTRQ. Lys-253 is covalently cross-linked (Glycyl lysine isopeptide (Lys-Gly) (interchain with G-Cter in SUMO2)). Over residues 302–328 the composition is skewed to polar residues; that stretch reads AGPSTAKLNSAAQNSSGKPAASSSNQK. The interval 302–443 is disordered; it reads AGPSTAKLNS…PTSQESQLNA (142 aa). Composition is skewed to low complexity over residues 348 to 357 and 381 to 436; these read GSGNSTSPSV and VSKV…GPTS.

Belongs to the Integrator subunit 12 family. In terms of assembly, component of the Integrator complex, composed of core subunits INTS1, INTS2, INTS3, INTS4, INTS5, INTS6, INTS7, INTS8, INTS9/RC74, INTS10, INTS11/CPSF3L, INTS12, INTS13, INTS14 and INTS15. The core complex associates with protein phosphatase 2A subunits PPP2CA and PPP2R1A, to form the Integrator-PP2A (INTAC) complex. Dephosphorylated at Ser-127 by the PNUTS-PP1 complex, promoting RNA polymerase II transcription pause-release.

The protein localises to the nucleus. Functionally, component of the integrator complex, a multiprotein complex that terminates RNA polymerase II (Pol II) transcription in the promoter-proximal region of genes. The integrator complex provides a quality checkpoint during transcription elongation by driving premature transcription termination of transcripts that are unfavorably configured for transcriptional elongation: the complex terminates transcription by (1) catalyzing dephosphorylation of the C-terminal domain (CTD) of Pol II subunit POLR2A/RPB1 and SUPT5H/SPT5, (2) degrading the exiting nascent RNA transcript via endonuclease activity and (3) promoting the release of Pol II from bound DNA. The integrator complex is also involved in terminating the synthesis of non-coding Pol II transcripts, such as enhancer RNAs (eRNAs), small nuclear RNAs (snRNAs), telomerase RNAs and long non-coding RNAs (lncRNAs). Mediates recruitment of cytoplasmic dynein to the nuclear envelope, probably as component of the integrator complex. This is Integrator complex subunit 12 (Ints12) from Mus musculus (Mouse).